The sequence spans 959 residues: Leucine--tRNA ligase (959 aa).

Residues 39-49 carry the 'HIGH' region motif; sequence PYVNAYPHLGS. A 'KMSKS' region motif is present at residues 637-641; sequence KMSKS. ATP is bound at residue lysine 640. The segment at 933-959 is disordered; it reads TEEDGGSPRRANALPGRPALYAEKRGG.

This sequence belongs to the class-I aminoacyl-tRNA synthetase family.

The protein resides in the cytoplasm. It carries out the reaction tRNA(Leu) + L-leucine + ATP = L-leucyl-tRNA(Leu) + AMP + diphosphate. The sequence is that of Leucine--tRNA ligase from Aeropyrum pernix (strain ATCC 700893 / DSM 11879 / JCM 9820 / NBRC 100138 / K1).